Reading from the N-terminus, the 266-residue chain is Indole-3-glycerol phosphate synthase (266 aa).

This sequence belongs to the TrpC family.

The catalysed reaction is 1-(2-carboxyphenylamino)-1-deoxy-D-ribulose 5-phosphate + H(+) = (1S,2R)-1-C-(indol-3-yl)glycerol 3-phosphate + CO2 + H2O. It participates in amino-acid biosynthesis; L-tryptophan biosynthesis; L-tryptophan from chorismate: step 4/5. This is Indole-3-glycerol phosphate synthase from Opitutus terrae (strain DSM 11246 / JCM 15787 / PB90-1).